Consider the following 690-residue polypeptide: Methionine--tRNA ligase (690 aa).

A 'HIGH' region motif is present at residues 12 to 22; sequence PYANGSIHLGH. Zn(2+) is bound by residues C143, C146, C156, and C159. A 'KMSKS' region motif is present at residues 328–332; sequence KMSKS. Position 331 (K331) interacts with ATP. The region spanning 582–690 is the tRNA-binding domain; sequence DFAKVDLRIA…SGAEPGMKVK (109 aa).

Belongs to the class-I aminoacyl-tRNA synthetase family. MetG type 1 subfamily. In terms of assembly, homodimer. It depends on Zn(2+) as a cofactor.

Its subcellular location is the cytoplasm. It carries out the reaction tRNA(Met) + L-methionine + ATP = L-methionyl-tRNA(Met) + AMP + diphosphate. Functionally, is required not only for elongation of protein synthesis but also for the initiation of all mRNA translation through initiator tRNA(fMet) aminoacylation. This Thiobacillus denitrificans (strain ATCC 25259 / T1) protein is Methionine--tRNA ligase.